Consider the following 189-residue polypeptide: dCTP deaminase, dUMP-forming (189 aa).

DCTP contacts are provided by residues 101–106 (KSSLGR), Asp119, 127–129 (TLE), Gln148, Tyr162, Lys170, and Gln174. Residue Glu129 is the Proton donor/acceptor of the active site. The interval 163 to 189 (GSGKLGSKYQGQRGPTPSKAYLNFPNK) is disordered.

This sequence belongs to the dCTP deaminase family. Homotrimer.

The catalysed reaction is dCTP + 2 H2O = dUMP + NH4(+) + diphosphate. Its pathway is pyrimidine metabolism; dUMP biosynthesis; dUMP from dCTP: step 1/1. Functionally, bifunctional enzyme that catalyzes both the deamination of dCTP to dUTP and the hydrolysis of dUTP to dUMP without releasing the toxic dUTP intermediate. The protein is dCTP deaminase, dUMP-forming of Corynebacterium glutamicum (strain R).